Reading from the N-terminus, the 159-residue chain is RNA pyrophosphohydrolase (159 aa).

The Nudix hydrolase domain occupies 6–149 (GFRPNVGIIL…KREVYRRALK (144 aa)). A Nudix box motif is present at residues 38–59 (GGINARETPEEALFRELNEEVG).

Belongs to the Nudix hydrolase family. RppH subfamily. A divalent metal cation is required as a cofactor.

Its function is as follows. Accelerates the degradation of transcripts by removing pyrophosphate from the 5'-end of triphosphorylated RNA, leading to a more labile monophosphorylated state that can stimulate subsequent ribonuclease cleavage. In Stutzerimonas stutzeri (strain A1501) (Pseudomonas stutzeri), this protein is RNA pyrophosphohydrolase.